We begin with the raw amino-acid sequence, 379 residues long: Glutamate 5-kinase (379 aa).

Lysine 17 provides a ligand contact to ATP. The substrate site is built by serine 57, aspartate 144, and asparagine 156. 176–177 (SD) contacts ATP. In terms of domain architecture, PUA spans 282-359 (SGILMIDQGA…EEIESILGYE (78 aa)).

Belongs to the glutamate 5-kinase family.

The protein localises to the cytoplasm. It catalyses the reaction L-glutamate + ATP = L-glutamyl 5-phosphate + ADP. Its pathway is amino-acid biosynthesis; L-proline biosynthesis; L-glutamate 5-semialdehyde from L-glutamate: step 1/2. Catalyzes the transfer of a phosphate group to glutamate to form L-glutamate 5-phosphate. The sequence is that of Glutamate 5-kinase from Bartonella henselae (strain ATCC 49882 / DSM 28221 / CCUG 30454 / Houston 1) (Rochalimaea henselae).